A 349-amino-acid polypeptide reads, in one-letter code: UPF0324 inner membrane protein YeiH (349 aa).

Residues 1–12 (MTELTLQNHRRT) lie on the Periplasmic side of the membrane. The chain crosses the membrane as a helical span at residues 13–35 (MWHFIPGLALSAVITGVALWGGA). The Cytoplasmic segment spans residues 36 to 38 (IPA). The helical transmembrane segment at 39-61 (VAGAGFSALTLAILLGMVIGNTV) threads the bilayer. Residues 62 to 99 (YPQIWKQCDGGVLFAKQHLLRLGIILYGFRLTFSQIAD) are Periplasmic-facing. A helical membrane pass occupies residues 100–122 (VGISGIVIDVLTLSSTFMLACFL). Residues 123–131 (GQKVFGLDR) lie on the Cytoplasmic side of the membrane. Residues 132–151 (HTSWLIGAGSSICGAAAVLA) form a helical membrane-spanning segment. At 152–162 (TEPVVKAEASK) the chain is on the periplasmic side. Residues 163–185 (VTVAVATVVIFGTIAIFLYPAMY) form a helical membrane-spanning segment. Residues 186–261 (PLLAHWFSPE…SPATGAEKSK (76 aa)) are Cytoplasmic-facing. Residues 262-284 (ITIPWFAIFFIVVAIFNSFHLLP) form a helical membrane-spanning segment. Topologically, residues 285–290 (KAVVDM) are periplasmic. A helical transmembrane segment spans residues 291–313 (LVTLDTVLLAMAMAALGLTTHVS). Over 314 to 322 (ALKKAGAKP) the chain is Cytoplasmic. Residues 323 to 345 (LLMALALFAWLIIGGGAINVLIH) form a helical membrane-spanning segment. Over 346 to 349 (SLIA) the chain is Periplasmic.

This sequence belongs to the UPF0324 family.

It is found in the cell inner membrane. This is UPF0324 inner membrane protein YeiH (yeiH) from Salmonella typhi.